Consider the following 168-residue polypeptide: Endoribonuclease YbeY (168 aa).

The Zn(2+) site is built by His-128, His-132, and His-138.

The protein belongs to the endoribonuclease YbeY family. Requires Zn(2+) as cofactor.

It is found in the cytoplasm. Functionally, single strand-specific metallo-endoribonuclease involved in late-stage 70S ribosome quality control and in maturation of the 3' terminus of the 16S rRNA. This is Endoribonuclease YbeY from Sphingopyxis alaskensis (strain DSM 13593 / LMG 18877 / RB2256) (Sphingomonas alaskensis).